Reading from the N-terminus, the 89-residue chain is Conotoxin Bu5 (89 aa).

A signal peptide spans 1-22; that stretch reads MKLTCVLIVAVLFLTACQLATA. Residues 23–49 constitute a propeptide that is removed on maturation; that stretch reads ENSREEQGYSAVRSSDQIQDSDLKLTK. Cystine bridges form between Cys-51–Cys-66, Cys-58–Cys-70, and Cys-65–Cys-79. Position 79 is a cysteine amide (Cys-79). The propeptide occupies 80–89; that stretch reads GVSIDYYDSR.

The protein belongs to the conotoxin O1 superfamily. As to expression, expressed by the venom duct.

It localises to the secreted. This Conus bullatus (Bubble cone) protein is Conotoxin Bu5.